Reading from the N-terminus, the 418-residue chain is Endoglucanase EG-II (418 aa).

A signal peptide spans 1–21 (MNKSVAPLLLAASILYGGAVA). Gln22 is modified (pyrrolidone carboxylic acid). Positions 22–57 (QQTVWGQCGGIGWSGPTNCAPGSACSTLNPYYAQCI) constitute a CBM1 domain. The segment at 58-91 (PGATTITTSTRPPSGPTTTTRATSTSSSTPPTSS) is linker. A disordered region spans residues 63 to 91 (ITTSTRPPSGPTTTTRATSTSSSTPPTSS). Positions 92–418 (GVRFAGVNIA…SLVSSCLARK (327 aa)) are catalytic. Residues Cys107 and Cys113 are joined by a disulfide bond. Asn124 carries an N-linked (GlcNAc) asparagine glycan. Cys183 and Cys190 form a disulfide bridge. Glu239 serves as the catalytic Proton donor/acceptor. Cystine bridges form between Cys323–Cys359 and Cys364–Cys414. Glu350 serves as the catalytic Nucleophile.

This sequence belongs to the glycosyl hydrolase 5 (cellulase A) family.

The protein localises to the secreted. It catalyses the reaction Endohydrolysis of (1-&gt;4)-beta-D-glucosidic linkages in cellulose, lichenin and cereal beta-D-glucans.. In terms of biological role, endoglucanase (EG) that cleaves the internal beta-1,4-glucosidic bonds in cellulose. The degradation of cellulose involves an interplay between different cellulolytic enzymes. Hydrolysis starts with EGs, which cut internal glycosidic linkages to reduce the polymerization degree of the substrate and creates new chain ends for exocellobiohydrolases (CBHs). The CBH release the disaccharide cellobiose from the non-reducing end of the cellulose polymer chain. Finally, beta-1,4-glucosidases hydrolyze the cellobiose and other short cello-oligosaccharides into glucose units. The polypeptide is Endoglucanase EG-II (egl2) (Hypocrea jecorina (Trichoderma reesei)).